Reading from the N-terminus, the 522-residue chain is Circadian clock oscillator protein KaiC (522 aa).

KaiC domains lie at 1-248 and 262-522; these read MKKS…INIF and ARVS…DDLL. ATP contacts are provided by Gly50, Thr51, Gly52, Lys53, Thr54, Ser90, Lys225, Leu226, Arg227, Thr229, His231, Thr241, Asp242, Thr291, Gly292, Thr293, Gly294, Lys295, Thr296, and Leu297. Residue Thr54 participates in Mg(2+) binding. Thr296 contacts Mg(2+). Glu319 serves as a coordination point for Mg(2+). Trp332 serves as a coordination point for ATP. A Phosphoserine; by autocatalysis modification is found at Ser432. The residue at position 433 (Thr433) is a Phosphothreonine; by autocatalysis. ATP is bound by residues Arg452, Lys458, Met459, Arg460, Ser462, His464, and Lys466.

Belongs to the KaiC family. In terms of assembly, homohexamer; hexamerization is dependent on ATP-binding. The KaiABC complex composition changes during the circadian cycle to control KaiC phosphorylation. Complexes KaiC(6), KaiA(2-4):KaiC(6), KaiB(6):KaiC(6) and KaiC(6):KaiB(6):KaiA(12) are among the most important forms, many form cooperatively. KaiC interacts with SasA, activating its autokinase function and leading to RpaA activation. It depends on Mg(2+) as a cofactor. Post-translationally, phosphorylated on serine and threonine residues by autocatalysis. Has a 4 step phosphorylation cycle; the autokinase acts first on Thr-433, then Ser-432. When Ser-432 is modified KaiC switches to an autophosphatase mode, acting first on phospho-Thr-433 then phospho-Ser-432.

The catalysed reaction is L-seryl-[protein] + ATP = O-phospho-L-seryl-[protein] + ADP + H(+). The enzyme catalyses L-threonyl-[protein] + ATP = O-phospho-L-threonyl-[protein] + ADP + H(+). It catalyses the reaction ATP + H2O = ADP + phosphate + H(+). Its activity is regulated as follows. The interaction with KaiA enhances its phosphorylation status, while the interaction with KaiB decreases it. Its function is as follows. Central component of the KaiABC oscillator complex, which constitutes the main circadian regulator in cyanobacteria. Complex composition changes during the circadian cycle to control KaiC phosphorylation. KaiA stimulates KaiC autophosphorylation, while KaiB sequesters KaiA, leading to KaiC autodephosphorylation. Clock output pathways impact the RpaA transcriptional regulator. KaiC enhances the autophosphorylation activity of SasA, which then transfers its phosphate group to RpaA to activate it. KaiB and KaiC together enhance the phospho-RpaA dephosphatase activity of CikA. In terms of biological role, has a weak, temperature-independent ATPase activity; ATPase activity defines the circadian period. The phosphorylation state of KaiC modulates its ATPase activity and effects KaiB binding. The sequence is that of Circadian clock oscillator protein KaiC from Acaryochloris marina (strain MBIC 11017).